The primary structure comprises 392 residues: Solute carrier family 35 member B1 (392 aa).

Residues 1 to 40 (MSLTKKIKNEKSLKQEKQTDQLKSNLRNNNNNINNKSKPK) form a disordered region. Basic and acidic residues predominate over residues 7-20 (IKNEKSLKQEKQTD). The segment covering 25 to 35 (NLRNNNNNINN) has biased composition (low complexity). The next 9 membrane-spanning stretches (helical) occupy residues 57-77 (ELFFIFCVGGIYIFYLLYGLV), 97-117 (AFLLALQCFFNMVSAWLVSLV), 124-144 (NTPFMKYGFVSMLLVISTFLS), 155-175 (TQVLAKSCKPIPVIFMGLLLF), 179-199 (YPFLKYIVVIVISLGISLFML), 215-235 (HLFGNFILFVSLMMDGVMGPF), 247-267 (ATSMMLNTNIWNLGLFSIMAF), 285-305 (VIKLILAFCITSAIGQQFIFL), and 341-361 (LQWAAICMVFGGLILDLYISY). A Di-lysine motif motif is present at residues 389–392 (KKSL).

It belongs to the nucleotide-sugar transporter family. SLC35B subfamily.

The protein resides in the endoplasmic reticulum membrane. In terms of biological role, probable sugar transporter. In Dictyostelium discoideum (Social amoeba), this protein is Solute carrier family 35 member B1 (slc35b1).